The chain runs to 572 residues: Cytochrome P450 monooxygenase xilC (572 aa).

A heme-binding site is contributed by Cys515.

Belongs to the cytochrome P450 family. Requires heme as cofactor.

Its pathway is secondary metabolite biosynthesis. Cytochrome P450 monooxygenase; part of the gene cluster that mediates the biosynthesis of the 6-methyl-2-pyrone derivative xylariolide D. XilC hydroxylates the 5-alkyl-6-methyl-2-pyrone backbone called prexylariolide D, produced by the highly reducing polyketide synthase xilA, on its side chain to form xylariolide D. This is Cytochrome P450 monooxygenase xilC from Penicillium rubens (strain ATCC 28089 / DSM 1075 / NRRL 1951 / Wisconsin 54-1255) (Penicillium chrysogenum).